Here is a 471-residue protein sequence, read N- to C-terminus: Ribulose bisphosphate carboxylase large chain 2 (471 aa).

Substrate is bound by residues Asn-116 and Thr-166. Residue Lys-168 is the Proton acceptor of the active site. Lys-170 provides a ligand contact to substrate. Mg(2+) is bound by residues Lys-194, Asp-196, and Glu-197. At Lys-194 the chain carries N6-carboxylysine. His-287 serves as the catalytic Proton acceptor. The substrate site is built by Arg-288, His-320, and Ser-372.

This sequence belongs to the RuBisCO large chain family. Type I subfamily. Heterohexadecamer of 8 large chains and 8 small chains; disulfide-linked. The disulfide link is formed within the large subunit homodimers. The cofactor is Mg(2+). In terms of processing, the disulfide bond which can form in the large chain dimeric partners within the hexadecamer appears to be associated with oxidative stress and protein turnover.

It catalyses the reaction 2 (2R)-3-phosphoglycerate + 2 H(+) = D-ribulose 1,5-bisphosphate + CO2 + H2O. The enzyme catalyses D-ribulose 1,5-bisphosphate + O2 = 2-phosphoglycolate + (2R)-3-phosphoglycerate + 2 H(+). Functionally, ruBisCO catalyzes two reactions: the carboxylation of D-ribulose 1,5-bisphosphate, the primary event in carbon dioxide fixation, as well as the oxidative fragmentation of the pentose substrate. Both reactions occur simultaneously and in competition at the same active site. This is Ribulose bisphosphate carboxylase large chain 2 from Allochromatium vinosum (strain ATCC 17899 / DSM 180 / NBRC 103801 / NCIMB 10441 / D) (Chromatium vinosum).